Here is a 347-residue protein sequence, read N- to C-terminus: UDP-N-acetylenolpyruvoylglucosamine reductase (347 aa).

Residues 15 to 187 (FGIEQTCSYL…TAIGLKLPKR (173 aa)) enclose the FAD-binding PCMH-type domain. The active site involves arginine 163. The active-site Proton donor is serine 233. Residue glutamate 328 is part of the active site.

This sequence belongs to the MurB family. FAD serves as cofactor.

It localises to the cytoplasm. It catalyses the reaction UDP-N-acetyl-alpha-D-muramate + NADP(+) = UDP-N-acetyl-3-O-(1-carboxyvinyl)-alpha-D-glucosamine + NADPH + H(+). It functions in the pathway cell wall biogenesis; peptidoglycan biosynthesis. Its function is as follows. Cell wall formation. The sequence is that of UDP-N-acetylenolpyruvoylglucosamine reductase from Vibrio parahaemolyticus serotype O3:K6 (strain RIMD 2210633).